Consider the following 138-residue polypeptide: MLIPRKVKHRKQHHPKKKGTASGGTTVAFGDYGIQALGHAYITNRQIESARIAINRHIKRGGKVWINIFPDRPLTKKPAETRMGSGKGSPEWWVANVKPGRVLFELSYPNEETARQALTRAIHKLPIKARIITREEQF.

Residues 1–19 (MLIPRKVKHRKQHHPKKKG) show a composition bias toward basic residues. Residues 1 to 24 (MLIPRKVKHRKQHHPKKKGTASGG) form a disordered region.

Belongs to the universal ribosomal protein uL16 family. In terms of assembly, part of the 50S ribosomal subunit.

Binds 23S rRNA and is also seen to make contacts with the A and possibly P site tRNAs. This chain is Large ribosomal subunit protein uL16, found in Mycobacteroides abscessus (strain ATCC 19977 / DSM 44196 / CCUG 20993 / CIP 104536 / JCM 13569 / NCTC 13031 / TMC 1543 / L948) (Mycobacterium abscessus).